The chain runs to 441 residues: Chromatin structure-remodeling complex subunit SFH1 (441 aa).

Over residues 124–137 (DFDANDFEDDDDDD) the composition is skewed to acidic residues. 2 disordered regions span residues 124–183 (DFDA…AAPP) and 383–407 (EMTP…KRES). Basic and acidic residues-rich tracts occupy residues 138–147 (QSQRESRDGS) and 155–166 (DGTKKEEQDKFA).

The protein belongs to the SNF5 family.

It is found in the nucleus. Its function is as follows. Part of the chromatin structure-remodeling complex (RSC) which is involved in transcription regulation and nucleosome positioning. RSC is responsible for the transfer of a histone octamer from a nucleosome core particle to naked DNA. The reaction requires ATP and involves an activated RSC-nucleosome intermediate. Remodeling reaction also involves DNA translocation, DNA twist and conformational change. As a reconfigurer of centromeric and flanking nucleosomes, RSC complex is required both for proper kinetochore function in chromosome segregation and, via a PKC1-dependent signaling pathway, for organization of the cellular cytoskeleton. This subunit is essential for mitotic growth and required for cell cycle progression. This Yarrowia lipolytica (strain CLIB 122 / E 150) (Yeast) protein is Chromatin structure-remodeling complex subunit SFH1 (SFH1).